Consider the following 476-residue polypeptide: Growth/differentiation factor 10 (476 aa).

The signal sequence occupies residues 1–29 (MAPGLARISLRSQLLPLVPLLLLLRGAGC). Residues 30–366 (GHRVPSWSSL…EKTMQKARRR (337 aa)) constitute a propeptide that is removed on maturation. N114, N152, and N277 each carry an N-linked (GlcNAc...) asparagine glycan. 2 disordered regions span residues 268-305 (GDFE…LDER) and 330-358 (PRTG…FDEK). 3 disulfide bridges follow: C374/C441, C403/C473, and C407/C475. N-linked (GlcNAc...) asparagine glycosylation occurs at N467.

It belongs to the TGF-beta family. Homodimer or heterodimer. Can form a non-covalent complex of the mature region and the pro-region. As to expression, costa, costicartilage, femur, calvaria, trachea, aorta and brain. Predominantly in the cerebellum.

The protein resides in the secreted. Functionally, growth factor involved in osteogenesis and adipogenesis. Plays an inhibitory role in the process of osteoblast differentiation via SMAD2/3 pathway. Plays an inhibitory role in the process of adipogenesis. In Rattus norvegicus (Rat), this protein is Growth/differentiation factor 10.